Consider the following 437-residue polypeptide: UDP-N-acetylmuramate--L-alanine ligase (437 aa).

An ATP-binding site is contributed by 108 to 114; that stretch reads GAHGKTS.

This sequence belongs to the MurCDEF family.

It localises to the cytoplasm. It catalyses the reaction UDP-N-acetyl-alpha-D-muramate + L-alanine + ATP = UDP-N-acetyl-alpha-D-muramoyl-L-alanine + ADP + phosphate + H(+). Its pathway is cell wall biogenesis; peptidoglycan biosynthesis. Cell wall formation. The protein is UDP-N-acetylmuramate--L-alanine ligase of Staphylococcus aureus (strain JH9).